The following is a 555-amino-acid chain: Glutamine--tRNA ligase (555 aa).

Residues 34-44 (PEPNGFLHIGH) carry the 'HIGH' region motif. ATP contacts are provided by residues 35–37 (EPN) and 41–47 (HIGHAKS). L-glutamine contacts are provided by Asp-67 and Tyr-212. Residues Thr-231, 261–262 (RL), and 269–271 (LSK) contribute to the ATP site. Residues 268–272 (VLSKR) carry the 'KMSKS' region motif.

It belongs to the class-I aminoacyl-tRNA synthetase family. Monomer.

It is found in the cytoplasm. It carries out the reaction tRNA(Gln) + L-glutamine + ATP = L-glutaminyl-tRNA(Gln) + AMP + diphosphate. This Alteromonas mediterranea (strain DSM 17117 / CIP 110805 / LMG 28347 / Deep ecotype) protein is Glutamine--tRNA ligase.